The following is a 340-amino-acid chain: ATP-dependent 6-phosphofructokinase (340 aa).

Gly-11 is an ATP binding site. 21 to 25 is an ADP binding site; sequence RAVVR. Residues 72 to 73 and 102 to 105 each bind ATP; these read RY and GDGS. Residue Asp-103 participates in Mg(2+) binding. 125–127 serves as a coordination point for substrate; sequence TID. Asp-127 acts as the Proton acceptor in catalysis. Position 154 (Arg-154) interacts with ADP. Residues Arg-162 and 169 to 171 contribute to the substrate site; that span reads MGR. ADP contacts are provided by residues 185–187, Lys-211, and 213–215; these read GAD and KNH. Substrate contacts are provided by residues Glu-222, Arg-244, and 250–253; that span reads HIQR.

The protein belongs to the phosphofructokinase type A (PFKA) family. ATP-dependent PFK group I subfamily. Prokaryotic clade 'B1' sub-subfamily. Homotetramer. Mg(2+) serves as cofactor.

It is found in the cytoplasm. The enzyme catalyses beta-D-fructose 6-phosphate + ATP = beta-D-fructose 1,6-bisphosphate + ADP + H(+). Its pathway is carbohydrate degradation; glycolysis; D-glyceraldehyde 3-phosphate and glycerone phosphate from D-glucose: step 3/4. With respect to regulation, allosterically activated by ADP and other diphosphonucleosides, and allosterically inhibited by phosphoenolpyruvate. Its function is as follows. Catalyzes the phosphorylation of D-fructose 6-phosphate to fructose 1,6-bisphosphate by ATP, the first committing step of glycolysis. In Lactococcus lactis subsp. lactis (Streptococcus lactis), this protein is ATP-dependent 6-phosphofructokinase.